Here is a 969-residue protein sequence, read N- to C-terminus: RNA polymerase-associated protein RapA (969 aa).

Positions 164–334 (EVGRRYAPRV…FARLRLLDPD (171 aa)) constitute a Helicase ATP-binding domain. ATP is bound at residue 177–184 (DEVGLGKT). The short motif at 280–283 (DEAH) is the DEAH box element. The Helicase C-terminal domain maps to 492–668 (RVNWLLELLK…GKSDGLESLI (177 aa)).

The protein belongs to the SNF2/RAD54 helicase family. RapA subfamily. As to quaternary structure, interacts with the RNAP. Has a higher affinity for the core RNAP than for the holoenzyme. Its ATPase activity is stimulated by binding to RNAP.

Its function is as follows. Transcription regulator that activates transcription by stimulating RNA polymerase (RNAP) recycling in case of stress conditions such as supercoiled DNA or high salt concentrations. Probably acts by releasing the RNAP, when it is trapped or immobilized on tightly supercoiled DNA. Does not activate transcription on linear DNA. Probably not involved in DNA repair. This Aliivibrio fischeri (strain MJ11) (Vibrio fischeri) protein is RNA polymerase-associated protein RapA.